An 864-amino-acid chain; its full sequence is Leucine--tRNA ligase (864 aa).

The 'HIGH' region signature appears at 42 to 52 (PYPSGRLHMGH). The 'KMSKS' region signature appears at 621 to 625 (KMSKS). K624 contributes to the ATP binding site.

Belongs to the class-I aminoacyl-tRNA synthetase family.

Its subcellular location is the cytoplasm. The enzyme catalyses tRNA(Leu) + L-leucine + ATP = L-leucyl-tRNA(Leu) + AMP + diphosphate. The chain is Leucine--tRNA ligase from Alkalilimnicola ehrlichii (strain ATCC BAA-1101 / DSM 17681 / MLHE-1).